An 80-amino-acid polypeptide reads, in one-letter code: Peptide LaIT2 (80 aa).

The signal sequence occupies residues 1–21; sequence MAKHLIVMFLVIMVISSLVDC. Positions 49–80 constitute a BetaSPN-type CS-alpha/beta domain; the sequence is QYGCPIISNMCEDHCRRKKMEGQCDLLDCVCS. 3 disulfides stabilise this stretch: Cys52/Cys72, Cys59/Cys77, and Cys63/Cys79.

The protein belongs to the long chain scorpion toxin family. Class 2 subfamily. Expressed by the venom gland.

It is found in the secreted. Functionally, dual-function toxin that acts both as an insecticidal and an antimicrobial peptide. May inhibit voltage-gated potassium channels (Kv). This amphipathic peptide causes significant antimicrobial activity against E.coli (MIC=7 uM) but does not show any activity against S.aureus even at high concentration. In vivo, causes paralysis or death to crickets. This is Peptide LaIT2 from Liocheles australasiae (Dwarf wood scorpion).